Here is a 530-residue protein sequence, read N- to C-terminus: Ubiquitin carboxyl-terminal hydrolase 17-like protein 5 (530 aa).

The USP domain occupies 80-375 (AGLQNMGNTC…QAYVLFYIQK (296 aa)). Cysteine 89 acts as the Nucleophile in catalysis. The active-site Proton acceptor is the histidine 334. Basic and acidic residues-rich tracts occupy residues 382-392 (SESVSRGREPR) and 398-412 (DTDR…KRDH). 2 disordered regions span residues 382–412 (SESV…KRDH) and 477–530 (NHHP…LVCQ). Positions 493 to 505 (TPTHQESMNTGTL) are enriched in polar residues. A compositionally biased stretch (basic residues) spans 510–524 (GRARRSKGKNKHSKR).

It belongs to the peptidase C19 family. USP17 subfamily.

It is found in the nucleus. The protein localises to the endoplasmic reticulum. It catalyses the reaction Thiol-dependent hydrolysis of ester, thioester, amide, peptide and isopeptide bonds formed by the C-terminal Gly of ubiquitin (a 76-residue protein attached to proteins as an intracellular targeting signal).. In terms of biological role, deubiquitinating enzyme that removes conjugated ubiquitin from specific proteins to regulate different cellular processes that may include cell proliferation, progression through the cell cycle, apoptosis, cell migration, and the cellular response to viral infection. The protein is Ubiquitin carboxyl-terminal hydrolase 17-like protein 5 (USP17L5) of Homo sapiens (Human).